Consider the following 267-residue polypeptide: PHD finger protein ALFIN-LIKE 7 (267 aa).

The tract at residues 162–207 (TKVSNGSSKSNKSNPKPSKQSNSNSKPAKPPQPKDEEDSGPEGTED) is disordered. Residues 165–188 (SNGSSKSNKSNPKPSKQSNSNSKP) are compositionally biased toward low complexity. Residues 196–207 (DEEDSGPEGTED) are compositionally biased toward acidic residues. The PHD-type zinc finger occupies 211–263 (AYMCGACGETYANGEFWICCDVCEKWFHGKCVRITPAKAEHIKQYKCPGCSSK).

Belongs to the Alfin family. Interacts with H3K4me3 and to a lesser extent with H3K4me2.

The protein resides in the nucleus. Functionally, histone-binding component that specifically recognizes H3 tails trimethylated on 'Lys-4' (H3K4me3), which mark transcription start sites of virtually all active genes. The protein is PHD finger protein ALFIN-LIKE 7 of Oryza sativa subsp. japonica (Rice).